A 398-amino-acid chain; its full sequence is Fructose-bisphosphate aldolase 2, chloroplastic (398 aa).

The N-terminal 46 residues, 1–46, are a transit peptide targeting the chloroplast; it reads MASTSLLKASPVLDKSEWVKGQSVLFRQPSSASVVLRNRATSLTVR. Arg-95 contributes to the substrate binding site. A Phosphoserine modification is found at Ser-157. Position 185 (Lys-185) interacts with substrate. Ser-215 carries the phosphoserine modification. Catalysis depends on Glu-225, which acts as the Proton acceptor. The Schiff-base intermediate with dihydroxyacetone-P role is filled by Lys-267. Residue 309–311 coordinates substrate; that stretch reads SGG. Lys-394 bears the N6,N6,N6-trimethyllysine mark.

The protein belongs to the class I fructose-bisphosphate aldolase family. Homotetramer. Can be trimethylated at Lys-394 by LSMT-L. The methylation level has no influence on the ologomerization state or on the kinetic properties of the enzyme. In terms of processing, phosphorylated on tyrosine residues in response to abscisic acid (ABA) in germinating seeds. Highly expressed in rosettes leaves.

The protein resides in the plastid. It localises to the chloroplast. It is found in the plastoglobule. The protein localises to the chloroplast stroma. It catalyses the reaction beta-D-fructose 1,6-bisphosphate = D-glyceraldehyde 3-phosphate + dihydroxyacetone phosphate. Its pathway is carbohydrate degradation; glycolysis; D-glyceraldehyde 3-phosphate and glycerone phosphate from D-glucose: step 4/4. Functionally, plays a key role in glycolysis and gluconeogenesis. The polypeptide is Fructose-bisphosphate aldolase 2, chloroplastic (Arabidopsis thaliana (Mouse-ear cress)).